Consider the following 137-residue polypeptide: MNIDYVRSILPHRYPFLLVDGVIEESEDRIVAFKNISISDPVFQGHFPEYPIYPGVLIIEGLAQTAGILLLKDLEGIPLFLGIDEARFKKEVRPGDKLIYEVKKIGEKLGTVQVEGVAKVENTIVAKAKLLLGVKKK.

His46 is a catalytic residue.

The protein belongs to the thioester dehydratase family. FabZ subfamily.

The protein localises to the cytoplasm. The enzyme catalyses a (3R)-hydroxyacyl-[ACP] = a (2E)-enoyl-[ACP] + H2O. In terms of biological role, involved in unsaturated fatty acids biosynthesis. Catalyzes the dehydration of short chain beta-hydroxyacyl-ACPs and long chain saturated and unsaturated beta-hydroxyacyl-ACPs. The sequence is that of 3-hydroxyacyl-[acyl-carrier-protein] dehydratase FabZ from Thermotoga neapolitana (strain ATCC 49049 / DSM 4359 / NBRC 107923 / NS-E).